Reading from the N-terminus, the 483-residue chain is Glutamyl-tRNA(Gln) amidotransferase subunit A (483 aa).

Catalysis depends on charge relay system residues Lys-76 and Ser-151. The active-site Acyl-ester intermediate is Ser-175.

The protein belongs to the amidase family. GatA subfamily. In terms of assembly, heterotrimer of A, B and C subunits.

The catalysed reaction is L-glutamyl-tRNA(Gln) + L-glutamine + ATP + H2O = L-glutaminyl-tRNA(Gln) + L-glutamate + ADP + phosphate + H(+). Functionally, allows the formation of correctly charged Gln-tRNA(Gln) through the transamidation of misacylated Glu-tRNA(Gln) in organisms which lack glutaminyl-tRNA synthetase. The reaction takes place in the presence of glutamine and ATP through an activated gamma-phospho-Glu-tRNA(Gln). The sequence is that of Glutamyl-tRNA(Gln) amidotransferase subunit A from Pseudomonas syringae pv. tomato (strain ATCC BAA-871 / DC3000).